The sequence spans 202 residues: Thymidylate kinase (202 aa).

Position 7-14 (7-14 (GIDGSGKT)) interacts with ATP.

It belongs to the thymidylate kinase family.

The enzyme catalyses dTMP + ATP = dTDP + ADP. Functionally, phosphorylation of dTMP to form dTDP in both de novo and salvage pathways of dTTP synthesis. The protein is Thymidylate kinase of Ehrlichia chaffeensis (strain ATCC CRL-10679 / Arkansas).